We begin with the raw amino-acid sequence, 227 residues long: Urease accessory protein UreF (227 aa).

It belongs to the UreF family. In terms of assembly, ureD, UreF and UreG form a complex that acts as a GTP-hydrolysis-dependent molecular chaperone, activating the urease apoprotein by helping to assemble the nickel containing metallocenter of UreC. The UreE protein probably delivers the nickel.

The protein resides in the cytoplasm. Its function is as follows. Required for maturation of urease via the functional incorporation of the urease nickel metallocenter. The polypeptide is Urease accessory protein UreF (Bacillus sp. (strain TB-90)).